A 111-amino-acid chain; its full sequence is Large ribosomal subunit protein uL22 (111 aa).

This sequence belongs to the universal ribosomal protein uL22 family. Part of the 50S ribosomal subunit.

This protein binds specifically to 23S rRNA; its binding is stimulated by other ribosomal proteins, e.g. L4, L17, and L20. It is important during the early stages of 50S assembly. It makes multiple contacts with different domains of the 23S rRNA in the assembled 50S subunit and ribosome. In terms of biological role, the globular domain of the protein is located near the polypeptide exit tunnel on the outside of the subunit, while an extended beta-hairpin is found that lines the wall of the exit tunnel in the center of the 70S ribosome. This Chlamydia muridarum (strain MoPn / Nigg) protein is Large ribosomal subunit protein uL22.